Reading from the N-terminus, the 494-residue chain is Glycogen synthase (494 aa).

An ADP-alpha-D-glucose-binding site is contributed by Lys-15.

Belongs to the glycosyltransferase 1 family. Bacterial/plant glycogen synthase subfamily.

It carries out the reaction [(1-&gt;4)-alpha-D-glucosyl](n) + ADP-alpha-D-glucose = [(1-&gt;4)-alpha-D-glucosyl](n+1) + ADP + H(+). It functions in the pathway glycan biosynthesis; glycogen biosynthesis. Functionally, synthesizes alpha-1,4-glucan chains using ADP-glucose. The polypeptide is Glycogen synthase (Albidiferax ferrireducens (strain ATCC BAA-621 / DSM 15236 / T118) (Rhodoferax ferrireducens)).